The following is a 402-amino-acid chain: Acetate kinase (402 aa).

Asparagine 10 provides a ligand contact to Mg(2+). Position 17 (lysine 17) interacts with ATP. Arginine 89 lines the substrate pocket. Aspartate 148 serves as the catalytic Proton donor/acceptor. Residues 208 to 212, 283 to 285, and 334 to 338 each bind ATP; these read HLGNG, DCR, and GIGEN. Glutamate 389 serves as a coordination point for Mg(2+).

The protein belongs to the acetokinase family. In terms of assembly, homodimer. Mg(2+) is required as a cofactor. Requires Mn(2+) as cofactor.

The protein localises to the cytoplasm. It catalyses the reaction acetate + ATP = acetyl phosphate + ADP. It functions in the pathway metabolic intermediate biosynthesis; acetyl-CoA biosynthesis; acetyl-CoA from acetate: step 1/2. Catalyzes the formation of acetyl phosphate from acetate and ATP. Can also catalyze the reverse reaction. This is Acetate kinase from Actinobacillus pleuropneumoniae serotype 7 (strain AP76).